Consider the following 521-residue polypeptide: Protein YjiT (521 aa).

This chain is Protein YjiT (yjiT), found in Escherichia coli (strain K12).